The sequence spans 347 residues: Microfibril-associated glycoprotein 3 (347 aa).

Positions 1–22 are cleaved as a signal peptide; that stretch reads MKLHYCLCILLVVTFVPTALVL. Over 23-139 the chain is Extracellular; that stretch reads EDVTPLGTNQ…TLRVIFTSGD (117 aa). N-linked (GlcNAc...) asparagine glycans are attached at residues Asn-31, Asn-36, Asn-63, and Asn-103. The 84-residue stretch at 47 to 130 folds into the Ig-like C2-type domain; the sequence is AGSYSGDDVI…SPTRASYSVT (84 aa). Cys-68 and Cys-117 are oxidised to a cystine. The chain crosses the membrane as a helical span at residues 140 to 160; the sequence is MSVYYMVVCLIAFTITLILNV. Residues 161–347 lie on the Cytoplasmic side of the membrane; it reads TRLCLMSTHL…SAEGSTHHRE (187 aa). The disordered stretch occupies residues 280 to 347; sequence NPELGRSNSP…SAEGSTHHRE (68 aa). Over residues 311–331 the composition is skewed to polar residues; sequence VHLQSETKSIGTDSQDSSHFS.

In terms of processing, glycosylated.

It is found in the cell membrane. Functionally, component of the elastin-associated microfibrils. The polypeptide is Microfibril-associated glycoprotein 3 (Mfap3) (Rattus norvegicus (Rat)).